The following is a 264-amino-acid chain: Undecaprenyl-diphosphatase (264 aa).

Transmembrane regions (helical) follow at residues 1 to 21 (MTVF…FLPI), 40 to 60 (GLTF…AFFW), 81 to 101 (MFWY…LLEE), 109 to 129 (TPLL…WADA), 140 to 160 (ISMA…IPGV), 183 to 203 (FSFL…LKDI), 211 to 231 (AFIT…SFLL), and 239 to 259 (FALF…LAAA).

This sequence belongs to the UppP family.

The protein resides in the cell membrane. It catalyses the reaction di-trans,octa-cis-undecaprenyl diphosphate + H2O = di-trans,octa-cis-undecaprenyl phosphate + phosphate + H(+). In terms of biological role, catalyzes the dephosphorylation of undecaprenyl diphosphate (UPP). Confers resistance to bacitracin. The protein is Undecaprenyl-diphosphatase of Pelotomaculum thermopropionicum (strain DSM 13744 / JCM 10971 / SI).